The chain runs to 239 residues: Proteasome activator complex subunit 2 (239 aa).

Residue Ala2 is modified to N-acetylalanine. The residue at position 10 (Ser10) is a Phosphoserine.

It belongs to the PA28 family. As to quaternary structure, heterodimer of PSME1 and PSME2, which forms a hexameric ring.

Functionally, implicated in immunoproteasome assembly and required for efficient antigen processing. The PA28 activator complex enhances the generation of class I binding peptides by altering the cleavage pattern of the proteasome. This chain is Proteasome activator complex subunit 2 (PSME2), found in Homo sapiens (Human).